The sequence spans 608 residues: MCGICGIVGHQPASPIAFEALRRLEYRGYDSAGIATLTASGDIERRRAAGKLDNLEHVLKEHPLPGTTGIGHTRWATHGAPTENNAHPHEAGRVAIVHNGIIENFAELKKELEAKGRVFRTETDSETVAHLVDDYLGQGLEPREAAFAAIKRLEGAYAIAMIFKDHEGLLIGARHGAPLAVGYGNGEMFLGSDSIALAPMARKMTYLEDGDWCELTPDHVTIFDMTGAEVSRPVQDLTFMAGQVGKDGYRHYMEKELHEHPVAIGQTLKRITDPASKRIALPEMPFDPAQVPRITITACGSAYYAGMVGRYWLESLARIPVEIDVASEMRYREPPQPDKGVALLISQSGETADTLGVLRSLKKAGQSIVSVLNVEHSTMGRESDLVLGMDAGPEISVASTKAFTAQLSVLAALAIDFARARGTMDQAREERLTASLLDLPSRAAEVFTRTKDIQAMAAVVAQARDVLYLGRGICTPIAFEGALKLKEISYIHAEAYAAGELKHGPISLIDQTVPVVAIAPSTILFDKTLSNLQEAKARGGRILAFTDAEGAKRLEGVAEQVVIMPDVDAFVAPILYAIPVQMLAYEVALLKGTDVDQPRNLAKSVTVE.

The active-site Nucleophile; for GATase activity is cysteine 2. The Glutamine amidotransferase type-2 domain occupies 2 to 218 (CGICGIVGHQ…DGDWCELTPD (217 aa)). SIS domains are found at residues 284-423 (MPFD…ARGT) and 456-598 (MAAV…VDQP). Lysine 603 serves as the catalytic For Fru-6P isomerization activity.

In terms of assembly, homodimer.

The protein resides in the cytoplasm. The catalysed reaction is D-fructose 6-phosphate + L-glutamine = D-glucosamine 6-phosphate + L-glutamate. In terms of biological role, catalyzes the first step in hexosamine metabolism, converting fructose-6P into glucosamine-6P using glutamine as a nitrogen source. This chain is Glutamine--fructose-6-phosphate aminotransferase [isomerizing], found in Gluconobacter oxydans (strain 621H) (Gluconobacter suboxydans).